We begin with the raw amino-acid sequence, 1249 residues long: Apoptotic protease-activating factor 1 (1249 aa).

Positions 1–90 constitute a CARD domain; the sequence is MDAKARNCLL…KDLAGLLHSG (90 aa). One can recognise an NB-ARC domain in the interval 106–415; that stretch reads NTSFVRTVLC…LETEEVEDIL (310 aa). ATP is bound by residues 154 to 161 and Arg265; that span reads GMAGCGKS. A WD 1-1 repeat occupies 613-652; that stretch reads PHTDAVYHACFSQDGQRIASCGADKTLQVFKAETGEKLLD. One copy of the WD 1-2 repeat lies at 655–694; sequence AHEDEVLCCAFSSDDSYIATCSVDKKVKIWDSGTGKLVHT. Residues 697–738 form a WD 1-3 repeat; sequence EHSEQVNCCHFTNKSNHLLLATGSNDSFLKLWDLNQKECRNT. The stretch at 741 to 780 is one WD 1-4 repeat; sequence GHTNSVTHCRFSPDDELLASCSADGTLKLWDVRSANEKKS. A WD 1-5 repeat occupies 796–837; that stretch reads DVEVIVKCCSWSADGDRIIVAAKNKVLLLDIHTSGLLTEIHT. The stretch at 838 to 877 is one WD 1-6 repeat; it reads GHHSTIQYCDFSPYDHLAVIALSQYCVELWNIDSRVKVAD. A WD 1-7 repeat occupies 880-910; sequence GHLSWVHGVMFSPDGSSFLTASDDQTIRVWE. Positions 910–921 are interpropeller linker; it reads ETRKVCKNSAIV. A WD 2-1 repeat occupies 922 to 958; the sequence is LKQEIDVVFQENEMMVLAVDNIRGLQLIAGKTGQIDY. The WD 2-2 repeat unit spans residues 959–998; that stretch reads LPEAQVSCCCLSPHLEYVAFGDEEGAIKIIELPNNRVFSS. The WD 2-3 repeat unit spans residues 1001–1040; the sequence is GHKKAVRHIQFTADGKTLISSSEDSVIQVWNWQTEEYVFL. The stretch at 1042–1080 is one WD 2-4 repeat; sequence AHQETVKDFRLLRDSRLLSWSFDGTVKVWNVITGRIERD. One copy of the WD 2-5 repeat lies at 1083–1122; that stretch reads CHQGTVLSCAISSDATKFSSTSADKTAKIWSFELPSPLHE. The WD 2-6 repeat unit spans residues 1125–1164; sequence GHNSCVRCSAFSLDGILLATGDDNGEIRIWNVSDGQLLHL. A WD 2-7 repeat occupies 1176–1213; that stretch reads THGGWVTDVCFSPDRKMLVSAGGYLKWWNVVTGESSQT. A WD 2-8 repeat occupies 1214 to 1249; sequence FYTNGTNLKKIHVSPDFRTYVTVDNLGILYILQVLE.

As to quaternary structure, monomer. Oligomerizes to a heptameric ring, known as the apoptosome, upon binding of cytochrome c and dATP. Oligomeric Apaf-1 and pro-caspase-9 bind to each other via their respective NH2-terminal CARD domains. Interacts with UACA. Interacts with APIP. Interacts (via CARD and NACHT domains) with NAIP/BIRC1 (via NACHT domain). Interacts with CIAO2A.

The protein localises to the cytoplasm. Its function is as follows. Regulates programmed cell death; necessary for normal brain development. Participates with pro-caspase-9 (Apaf-3) in the cytochrome c-dependent activation of caspase-3, leading to apoptosis. This activation requires ATP. The protein is Apoptotic protease-activating factor 1 (Apaf1) of Rattus norvegicus (Rat).